The chain runs to 407 residues: Indoleamine 2,3-dioxygenase 2 (407 aa).

H347 serves as a coordination point for heme.

The protein belongs to the indoleamine 2,3-dioxygenase family. It depends on heme as a cofactor. As to expression, detected in liver, small intestine, spleen, placenta, thymus, lung, brain, kidney, and colon. Also expressed at low level in testis and thyroid. Not expressed in the majority of human tumor samples (&gt;99%).

The enzyme catalyses L-tryptophan + O2 = N-formyl-L-kynurenine. It participates in amino-acid degradation; L-tryptophan degradation via kynurenine pathway; L-kynurenine from L-tryptophan: step 1/2. Activity is inhibited by D-1MT (1-methyl-D-tryptophan) and MTH-trp (methylthiohydantoin-DL-tryptophan) but not L-1MT (1-methyl-L-tryptophan). Functionally, catalyzes the first and rate limiting step of the catabolism of the essential amino acid tryptophan along the kynurenine pathway. Involved in immune regulation. May not play a significant role in tryptophan-related tumoral resistance. This Homo sapiens (Human) protein is Indoleamine 2,3-dioxygenase 2.